The chain runs to 239 residues: Purine nucleoside phosphorylase DeoD-type 1 (239 aa).

H5 is a binding site for a purine D-ribonucleoside. Residues G21, R25, R44, and 88 to 91 each bind phosphate; that span reads RVGS. A purine D-ribonucleoside-binding positions include 180–182 and 204–205; these read EME and SD. The active-site Proton donor is D205.

It belongs to the PNP/UDP phosphorylase family. As to quaternary structure, homohexamer; trimer of homodimers.

It carries out the reaction a purine D-ribonucleoside + phosphate = a purine nucleobase + alpha-D-ribose 1-phosphate. The enzyme catalyses a purine 2'-deoxy-D-ribonucleoside + phosphate = a purine nucleobase + 2-deoxy-alpha-D-ribose 1-phosphate. Functionally, catalyzes the reversible phosphorolytic breakdown of the N-glycosidic bond in the beta-(deoxy)ribonucleoside molecules, with the formation of the corresponding free purine bases and pentose-1-phosphate. The polypeptide is Purine nucleoside phosphorylase DeoD-type 1 (Vibrio vulnificus (strain CMCP6)).